A 373-amino-acid chain; its full sequence is Protein phosphatase 1K, mitochondrial (373 aa).

The PPM-type phosphatase domain maps to 95–347 (KVGCSTQLGK…DNSTAIVVPF (253 aa)). Mg(2+) is bound by residues Asp-128, Gly-129, and Asp-338.

Belongs to the PP2C family. Mg(2+) serves as cofactor. Requires Mn(2+) as cofactor.

It localises to the mitochondrion matrix. The enzyme catalyses O-phospho-L-seryl-[protein] + H2O = L-seryl-[protein] + phosphate. It carries out the reaction O-phospho-L-threonyl-[protein] + H2O = L-threonyl-[protein] + phosphate. The polypeptide is Protein phosphatase 1K, mitochondrial (ppm1k) (Xenopus laevis (African clawed frog)).